We begin with the raw amino-acid sequence, 262 residues long: Pimeloyl-[acyl-carrier protein] methyl ester esterase (262 aa).

The AB hydrolase-1 domain occupies 15–242 (HLVLLHGWGL…AAHAPFISHP (228 aa)). Substrate is bound by residues Trp22, 82–83 (SL), and 143–147 (FLALQ). The active-site Nucleophile is Ser82. Catalysis depends on residues Asp207 and His235. His235 lines the substrate pocket.

Belongs to the AB hydrolase superfamily. Carboxylesterase BioH family. In terms of assembly, monomer.

It is found in the cytoplasm. It catalyses the reaction 6-carboxyhexanoyl-[ACP] methyl ester + H2O = 6-carboxyhexanoyl-[ACP] + methanol + H(+). The protein operates within cofactor biosynthesis; biotin biosynthesis. Its function is as follows. The physiological role of BioH is to remove the methyl group introduced by BioC when the pimeloyl moiety is complete. It allows to synthesize pimeloyl-ACP via the fatty acid synthetic pathway through the hydrolysis of the ester bonds of pimeloyl-ACP esters. This chain is Pimeloyl-[acyl-carrier protein] methyl ester esterase, found in Shigella flexneri.